A 479-amino-acid polypeptide reads, in one-letter code: UDP-N-acetylmuramate--L-alanine ligase (479 aa).

128-134 (GAHGKTT) serves as a coordination point for ATP.

It belongs to the MurCDEF family.

Its subcellular location is the cytoplasm. The enzyme catalyses UDP-N-acetyl-alpha-D-muramate + L-alanine + ATP = UDP-N-acetyl-alpha-D-muramoyl-L-alanine + ADP + phosphate + H(+). Its pathway is cell wall biogenesis; peptidoglycan biosynthesis. Functionally, cell wall formation. This Psychrobacter cryohalolentis (strain ATCC BAA-1226 / DSM 17306 / VKM B-2378 / K5) protein is UDP-N-acetylmuramate--L-alanine ligase.